We begin with the raw amino-acid sequence, 358 residues long: UDP-N-acetylglucosamine--N-acetylmuramyl-(pentapeptide) pyrophosphoryl-undecaprenol N-acetylglucosamine transferase (358 aa).

UDP-N-acetyl-alpha-D-glucosamine-binding positions include 11–13, asparagine 120, arginine 161, serine 188, and glutamine 282; that span reads TGG.

It belongs to the glycosyltransferase 28 family. MurG subfamily.

The protein resides in the cell inner membrane. The catalysed reaction is di-trans,octa-cis-undecaprenyl diphospho-N-acetyl-alpha-D-muramoyl-L-alanyl-D-glutamyl-meso-2,6-diaminopimeloyl-D-alanyl-D-alanine + UDP-N-acetyl-alpha-D-glucosamine = di-trans,octa-cis-undecaprenyl diphospho-[N-acetyl-alpha-D-glucosaminyl-(1-&gt;4)]-N-acetyl-alpha-D-muramoyl-L-alanyl-D-glutamyl-meso-2,6-diaminopimeloyl-D-alanyl-D-alanine + UDP + H(+). It participates in cell wall biogenesis; peptidoglycan biosynthesis. Functionally, cell wall formation. Catalyzes the transfer of a GlcNAc subunit on undecaprenyl-pyrophosphoryl-MurNAc-pentapeptide (lipid intermediate I) to form undecaprenyl-pyrophosphoryl-MurNAc-(pentapeptide)GlcNAc (lipid intermediate II). The polypeptide is UDP-N-acetylglucosamine--N-acetylmuramyl-(pentapeptide) pyrophosphoryl-undecaprenol N-acetylglucosamine transferase (Parasynechococcus marenigrum (strain WH8102)).